The primary structure comprises 652 residues: Acetyl-coenzyme A synthetase (652 aa).

Residues Arg-189–Lys-192 and Thr-311 each bind CoA. Residues Gly-387 to Pro-389, Asp-411 to Thr-416, Asp-500, and Arg-515 each bind ATP. Residue Ser-523 participates in CoA binding. Arg-526 is an ATP binding site. Mg(2+)-binding residues include Val-537, His-539, and Val-542. Arg-584 provides a ligand contact to CoA. N6-acetyllysine is present on Lys-609.

Belongs to the ATP-dependent AMP-binding enzyme family. Requires Mg(2+) as cofactor. In terms of processing, acetylated. Deacetylation by the SIR2-homolog deacetylase activates the enzyme.

The catalysed reaction is acetate + ATP + CoA = acetyl-CoA + AMP + diphosphate. In terms of biological role, catalyzes the conversion of acetate into acetyl-CoA (AcCoA), an essential intermediate at the junction of anabolic and catabolic pathways. AcsA undergoes a two-step reaction. In the first half reaction, AcsA combines acetate with ATP to form acetyl-adenylate (AcAMP) intermediate. In the second half reaction, it can then transfer the acetyl group from AcAMP to the sulfhydryl group of CoA, forming the product AcCoA. The protein is Acetyl-coenzyme A synthetase of Bartonella henselae (strain ATCC 49882 / DSM 28221 / CCUG 30454 / Houston 1) (Rochalimaea henselae).